Consider the following 281-residue polypeptide: 3-deoxy-manno-octulosonate cytidylyltransferase (281 aa).

It belongs to the KdsB family.

The protein localises to the cytoplasm. It catalyses the reaction 3-deoxy-alpha-D-manno-oct-2-ulosonate + CTP = CMP-3-deoxy-beta-D-manno-octulosonate + diphosphate. The protein operates within nucleotide-sugar biosynthesis; CMP-3-deoxy-D-manno-octulosonate biosynthesis; CMP-3-deoxy-D-manno-octulosonate from 3-deoxy-D-manno-octulosonate and CTP: step 1/1. It functions in the pathway bacterial outer membrane biogenesis; lipopolysaccharide biosynthesis. In terms of biological role, activates KDO (a required 8-carbon sugar) for incorporation into bacterial lipopolysaccharide in Gram-negative bacteria. The polypeptide is 3-deoxy-manno-octulosonate cytidylyltransferase (Xanthomonas campestris pv. campestris (strain B100)).